We begin with the raw amino-acid sequence, 209 residues long: Uracil phosphoribosyltransferase (209 aa).

Residues Arg-79, Arg-104, and 131 to 139 contribute to the 5-phospho-alpha-D-ribose 1-diphosphate site; that span reads DPMLATGGS. Uracil contacts are provided by residues Ile-194 and 199–201; that span reads GDA. Asp-200 lines the 5-phospho-alpha-D-ribose 1-diphosphate pocket.

It belongs to the UPRTase family. Mg(2+) is required as a cofactor.

It catalyses the reaction UMP + diphosphate = 5-phospho-alpha-D-ribose 1-diphosphate + uracil. Its pathway is pyrimidine metabolism; UMP biosynthesis via salvage pathway; UMP from uracil: step 1/1. With respect to regulation, allosterically activated by GTP. In terms of biological role, catalyzes the conversion of uracil and 5-phospho-alpha-D-ribose 1-diphosphate (PRPP) to UMP and diphosphate. This chain is Uracil phosphoribosyltransferase, found in Geobacter sp. (strain M21).